A 122-amino-acid chain; its full sequence is Large ribosomal subunit protein bL19c (122 aa).

It belongs to the bacterial ribosomal protein bL19 family.

Its subcellular location is the plastid. It is found in the chloroplast. In Rhodomonas salina (Cryptomonas salina), this protein is Large ribosomal subunit protein bL19c (rpl19).